The primary structure comprises 179 residues: Large ribosomal subunit protein uL5 (179 aa).

The protein belongs to the universal ribosomal protein uL5 family. As to quaternary structure, part of the 50S ribosomal subunit; part of the 5S rRNA/L5/L18/L25 subcomplex. Contacts the 5S rRNA and the P site tRNA. Forms a bridge to the 30S subunit in the 70S ribosome.

Functionally, this is one of the proteins that bind and probably mediate the attachment of the 5S RNA into the large ribosomal subunit, where it forms part of the central protuberance. In the 70S ribosome it contacts protein S13 of the 30S subunit (bridge B1b), connecting the 2 subunits; this bridge is implicated in subunit movement. Contacts the P site tRNA; the 5S rRNA and some of its associated proteins might help stabilize positioning of ribosome-bound tRNAs. This chain is Large ribosomal subunit protein uL5, found in Pseudomonas fluorescens (strain ATCC BAA-477 / NRRL B-23932 / Pf-5).